We begin with the raw amino-acid sequence, 443 residues long: Probable glutamate dehydrogenase (443 aa).

Residue lysine 86 is part of the active site.

Belongs to the Glu/Leu/Phe/Val dehydrogenases family.

It catalyses the reaction L-glutamate + NAD(+) + H2O = 2-oxoglutarate + NH4(+) + NADH + H(+). The enzyme catalyses L-glutamate + NADP(+) + H2O = 2-oxoglutarate + NH4(+) + NADPH + H(+). The protein is Probable glutamate dehydrogenase of Sinorhizobium fredii (strain NBRC 101917 / NGR234).